A 162-amino-acid chain; its full sequence is Sec-independent protein translocase protein TatB (162 aa).

The chain crosses the membrane as a helical span at residues 1–21 (MFDLGWTELLVIGVVALIVVG). Disordered stretches follow at residues 69-111 (ATNP…DRAE) and 124-162 (AADR…ETKA). Basic and acidic residues-rich tracts occupy residues 83–111 (ATRD…DRAE) and 124–141 (AADR…KAEE). Residues 144–155 (AALSATPASTAS) are compositionally biased toward low complexity.

It belongs to the TatB family. In terms of assembly, the Tat system comprises two distinct complexes: a TatABC complex, containing multiple copies of TatA, TatB and TatC subunits, and a separate TatA complex, containing only TatA subunits. Substrates initially bind to the TatABC complex, which probably triggers association of the separate TatA complex to form the active translocon.

The protein localises to the cell inner membrane. Its function is as follows. Part of the twin-arginine translocation (Tat) system that transports large folded proteins containing a characteristic twin-arginine motif in their signal peptide across membranes. Together with TatC, TatB is part of a receptor directly interacting with Tat signal peptides. TatB may form an oligomeric binding site that transiently accommodates folded Tat precursor proteins before their translocation. The protein is Sec-independent protein translocase protein TatB of Ruegeria sp. (strain TM1040) (Silicibacter sp.).